Reading from the N-terminus, the 287-residue chain is 4,4'-diapophytoene synthase (287 aa).

(2E,6E)-farnesyl diphosphate is bound by residues 18-21 (HSKS), Tyr-41, and Arg-45. The Mg(2+) site is built by Asp-48 and Asp-52. Gln-165 contributes to the (2E,6E)-farnesyl diphosphate binding site. A Mg(2+)-binding site is contributed by Asn-168. Arg-171 is a (2E,6E)-farnesyl diphosphate binding site. Position 172 (Asp-172) interacts with Mg(2+). Tyr-248 is a (2E,6E)-farnesyl diphosphate binding site.

The protein belongs to the phytoene/squalene synthase family. CrtM subfamily. Mg(2+) is required as a cofactor.

It carries out the reaction 2 (2E,6E)-farnesyl diphosphate = 15-cis-4,4'-diapophytoene + 2 diphosphate. It functions in the pathway carotenoid biosynthesis; staphyloxanthin biosynthesis; staphyloxanthin from farnesyl diphosphate: step 1/5. In terms of biological role, involved in the biosynthesis of the yellow-orange carotenoid staphyloxanthin, which plays a role in the virulence via its protective function against oxidative stress. Catalyzes the head-to-head condensation of two molecules of farnesyl diphosphate (FPP) into the colorless C(30) carotenoid 4,4'-diapophytoene (dehydrosqualene). The protein is 4,4'-diapophytoene synthase (crtM) of Staphylococcus aureus (strain bovine RF122 / ET3-1).